The chain runs to 323 residues: tRNA U34 carboxymethyltransferase (323 aa).

Carboxy-S-adenosyl-L-methionine is bound by residues lysine 91, tryptophan 105, lysine 110, glycine 130, aspartate 152–threonine 154, isoleucine 181–glutamate 182, methionine 196, tyrosine 200, and arginine 315.

This sequence belongs to the class I-like SAM-binding methyltransferase superfamily. CmoB family. Homotetramer.

The enzyme catalyses carboxy-S-adenosyl-L-methionine + 5-hydroxyuridine(34) in tRNA = 5-carboxymethoxyuridine(34) in tRNA + S-adenosyl-L-homocysteine + H(+). Its function is as follows. Catalyzes carboxymethyl transfer from carboxy-S-adenosyl-L-methionine (Cx-SAM) to 5-hydroxyuridine (ho5U) to form 5-carboxymethoxyuridine (cmo5U) at position 34 in tRNAs. This chain is tRNA U34 carboxymethyltransferase, found in Escherichia coli O139:H28 (strain E24377A / ETEC).